We begin with the raw amino-acid sequence, 281 residues long: Complement C1q tumor necrosis factor-related protein 1 (281 aa).

An N-terminal signal peptide occupies residues 1-25; it reads MGSCAQGFMLGCCLLLAITWGPILS. The interval 35–68 is disordered; sequence QEWEETEELPSPLDPVTRPEETREKYSPRQGEDL. Residues 51 to 66 show a composition bias toward basic and acidic residues; the sequence is TRPEETREKYSPRQGE. A glycan (N-linked (GlcNAc...) asparagine) is linked at Asn-93. The 42-residue stretch at 99–140 folds into the Collagen-like domain; it reads GEKGDRGDRGLQGKYGKIGSTGPRGHVGPKGQKGSIGAPGNH. Residues 107-136 form a disordered region; that stretch reads RGLQGKYGKIGSTGPRGHVGPKGQKGSIGA. The 141-residue stretch at 141 to 281 folds into the C1q domain; it reads CKSQYAAFSV…GYLVKPASEP (141 aa).

Its subcellular location is the secreted. The protein is Complement C1q tumor necrosis factor-related protein 1 (C1qtnf1) of Mus musculus (Mouse).